Reading from the N-terminus, the 380-residue chain is MTTAKVNLLDFDRKGLRKFFTEELNEKAFRAEQVMKWIYHFGVDDFEQMNNINKKLREKLLHRCEIVAPIVSEAQHSADGTIKWAMSVGDQDVETVYIPDGDRATLCVSSQVGCALECKFCSTAQQGFNRNLKVSEIVGQIWRAAREIGLEKETGRRPITNVVMMGMGEPLLNMKNLIPSLELMLDDLGFSLSKRRVTVSTSGVVSGLDQMTDNIDVALAISLHAPNDALRSQIMPINDRWDIQDFLASVRRYIASSNANRGKVTVEYVLLDHVNDDMDHARELAELMKDTPCKINLIPFNPYPGSPYKKPSNSRIDRFQKTLMEYNYTVTVRKTRGDDIDAACGQLVGDVIDRTKRTKMLKAASEANLIAGDVIQVKAV.

Glu94 serves as the catalytic Proton acceptor. One can recognise a Radical SAM core domain in the interval 100-339; the sequence is DGDRATLCVS…VTVRKTRGDD (240 aa). A disulfide bond links Cys107 and Cys344. The [4Fe-4S] cluster site is built by Cys114, Cys118, and Cys121. S-adenosyl-L-methionine-binding positions include 168–169, Ser200, 222–224, and Asn301; these read GE and SLH. Cys344 acts as the S-methylcysteine intermediate in catalysis.

Belongs to the radical SAM superfamily. RlmN family. The cofactor is [4Fe-4S] cluster.

It localises to the cytoplasm. It carries out the reaction adenosine(2503) in 23S rRNA + 2 reduced [2Fe-2S]-[ferredoxin] + 2 S-adenosyl-L-methionine = 2-methyladenosine(2503) in 23S rRNA + 5'-deoxyadenosine + L-methionine + 2 oxidized [2Fe-2S]-[ferredoxin] + S-adenosyl-L-homocysteine. The enzyme catalyses adenosine(37) in tRNA + 2 reduced [2Fe-2S]-[ferredoxin] + 2 S-adenosyl-L-methionine = 2-methyladenosine(37) in tRNA + 5'-deoxyadenosine + L-methionine + 2 oxidized [2Fe-2S]-[ferredoxin] + S-adenosyl-L-homocysteine. Functionally, specifically methylates position 2 of adenine 2503 in 23S rRNA and position 2 of adenine 37 in tRNAs. m2A2503 modification seems to play a crucial role in the proofreading step occurring at the peptidyl transferase center and thus would serve to optimize ribosomal fidelity. This Vibrio atlanticus (strain LGP32) (Vibrio splendidus (strain Mel32)) protein is Dual-specificity RNA methyltransferase RlmN.